The following is a 1116-amino-acid chain: Surface layer protein (1116 aa).

An N-terminal signal peptide occupies residues 1–53; that stretch reads MQDSGFKKKDRSTNIPQEQFVYTRGGEHKVMKKVVNSVLASALAITVAPMAFA. SLH domains follow at residues 54 to 117, 118 to 181, and 182 to 231; these read AEDT…KLAQ, FNTT…RGVW, and PNSM…YGTD.

The protein resides in the secreted. It localises to the cell wall. The protein localises to the S-layer. The protein is Surface layer protein of Brevibacillus choshinensis.